The primary structure comprises 415 residues: Carboxypeptidase B (415 aa).

An N-terminal signal peptide occupies residues 1–13 (MLLLLALVSVALA). A propeptide spans 14 to 108 (HASEEHFDGN…LESQFDSHTR (95 aa)) (activation peptide). Residues 116–410 (KYNKWETIEA…LAVKYIANYV (295 aa)) form the Peptidase M14 domain. Cys171 and Cys184 are joined by a disulfide. Residues His174 and Glu177 each contribute to the Zn(2+) site. Substrate-binding positions include 174-177 (HARE), Arg232, and 249-250 (NR). Disulfide bonds link Cys243-Cys266 and Cys257-Cys271. Residue His302 coordinates Zn(2+). Residues 303-304 (SY) and Tyr354 contribute to the substrate site. Glu376 functions as the Proton donor/acceptor in the catalytic mechanism.

It belongs to the peptidase M14 family. The cofactor is Zn(2+).

It is found in the secreted. The protein localises to the zymogen granule lumen. The enzyme catalyses Preferential release of a C-terminal lysine or arginine amino acid.. The polypeptide is Carboxypeptidase B (Cpb1) (Rattus norvegicus (Rat)).